The primary structure comprises 561 residues: Delta(24)-sterol reductase (561 aa).

Residues 1–25 (MSDLQTPLVRPKRKKTWVDYFVKFR) are Lumenal-facing. Residue S2 is modified to Phosphoserine. A helical; Signal-anchor membrane pass occupies residues 26–46 (WIIVIFIVLPFSATFYFLIYL). Residues 47-561 (GDMWSESKSF…HLETAYAEAD (515 aa)) lie on the Cytoplasmic side of the membrane. The FAD-binding PCMH-type domain occupies 49-232 (MWSESKSFEK…VAAEIRLIKV (184 aa)). The segment at 518 to 539 (CRKKYRAIGTFMSVYYKSKKGR) is interaction with calmodulin.

It belongs to the DIMINUTO family. As to quaternary structure, interacts with calmodulin.

Its subcellular location is the microsome membrane. The catalysed reaction is lathosterol + NADP(+) = 5alpha-cholesta-7,24-dien-3beta-ol + NADPH + H(+). In terms of biological role, plays a critical role in the general process of plant cell elongation. Involved in the synthesis of campesterol, an early precursor of brassinolide. Required for the conversion of 24-methylenecholesterol to campesterol and for the conversion of isofucosterol to sitosterol. Necessary for both the isomerization and reduction of 24-methylenecholesterol. Regulates indirectly phytochrome-mediated light responses through the modulation of brassinosteroid biosynthesis. This is Delta(24)-sterol reductase (DIM) from Arabidopsis thaliana (Mouse-ear cress).